Reading from the N-terminus, the 63-residue chain is MNFQNIFIFVALILAVFAGQSQAGWLKKIGKKIERVGQHTRDATIQGLGIAQQAANVAATARG.

Positions 1–23 are cleaved as a signal peptide; the sequence is MNFQNIFIFVALILAVFAGQSQA. R62 carries the post-translational modification Arginine amide.

The protein belongs to the cecropin family.

The protein localises to the secreted. Its function is as follows. Sarcotoxins, which are potent bactericidal proteins, are produced in response to injury. They are cytotoxic to both Gram-positive and Gram-negative bacteria. In Sarcophaga peregrina (Flesh fly), this protein is Sarcotoxin-1A.